We begin with the raw amino-acid sequence, 445 residues long: Fasciclin-like arabinogalactan protein 16 (445 aa).

Positions 1–23 are cleaved as a signal peptide; the sequence is MDSSYGATKFLLLLFLTTSIATA. FAS1 domains are found at residues 35 to 173 and 257 to 400; these read NSNS…ERLL and VKDF…DGVL. N-linked (GlcNAc...) asparagine glycans are attached at residues asparagine 72 and asparagine 279.

Belongs to the fasciclin-like AGP family.

The protein resides in the secreted. May be a cell surface adhesion protein. In Arabidopsis thaliana (Mouse-ear cress), this protein is Fasciclin-like arabinogalactan protein 16 (FLA16).